The chain runs to 347 residues: Protein RecA (347 aa).

80–87 contacts ATP; sequence GPESSGKT.

It belongs to the RecA family.

It is found in the cytoplasm. Its function is as follows. Can catalyze the hydrolysis of ATP in the presence of single-stranded DNA, the ATP-dependent uptake of single-stranded DNA by duplex DNA, and the ATP-dependent hybridization of homologous single-stranded DNAs. It interacts with LexA causing its activation and leading to its autocatalytic cleavage. The protein is Protein RecA of Chlorobaculum parvum (strain DSM 263 / NCIMB 8327) (Chlorobium vibrioforme subsp. thiosulfatophilum).